The sequence spans 255 residues: Tryptophan synthase alpha chain (255 aa).

Active-site proton acceptor residues include Glu51 and Asp62.

Belongs to the TrpA family. Tetramer of two alpha and two beta chains.

The enzyme catalyses (1S,2R)-1-C-(indol-3-yl)glycerol 3-phosphate + L-serine = D-glyceraldehyde 3-phosphate + L-tryptophan + H2O. Its pathway is amino-acid biosynthesis; L-tryptophan biosynthesis; L-tryptophan from chorismate: step 5/5. The alpha subunit is responsible for the aldol cleavage of indoleglycerol phosphate to indole and glyceraldehyde 3-phosphate. The chain is Tryptophan synthase alpha chain from Maridesulfovibrio salexigens (strain ATCC 14822 / DSM 2638 / NCIMB 8403 / VKM B-1763) (Desulfovibrio salexigens).